Consider the following 603-residue polypeptide: Elongation factor 4 (603 aa).

In terms of domain architecture, tr-type G spans 7 to 189; it reads SRIRNFSIIA…SIVHLVPPPE (183 aa). GTP is bound by residues 19–24 and 136–139; these read DHGKST and NKID.

It belongs to the TRAFAC class translation factor GTPase superfamily. Classic translation factor GTPase family. LepA subfamily.

The protein resides in the cell inner membrane. It catalyses the reaction GTP + H2O = GDP + phosphate + H(+). Required for accurate and efficient protein synthesis under certain stress conditions. May act as a fidelity factor of the translation reaction, by catalyzing a one-codon backward translocation of tRNAs on improperly translocated ribosomes. Back-translocation proceeds from a post-translocation (POST) complex to a pre-translocation (PRE) complex, thus giving elongation factor G a second chance to translocate the tRNAs correctly. Binds to ribosomes in a GTP-dependent manner. This Acaryochloris marina (strain MBIC 11017) protein is Elongation factor 4.